We begin with the raw amino-acid sequence, 326 residues long: Vitamin B12 import system permease protein BtuC (326 aa).

9 consecutive transmembrane segments (helical) span residues 15–35, 61–81, 88–108, 112–132, 146–166, 184–204, 240–260, 274–294, and 302–322; these read WLLS…CAGE, LAVL…QALF, PGLL…VLLG, LPGW…TLIL, LLAG…AIYF, GGVD…LIWI, GWMV…GLVI, VLLP…DVVA, and ELPI…WLLL.

The protein belongs to the binding-protein-dependent transport system permease family. FecCD subfamily. The complex is composed of two ATP-binding proteins (BtuD), two transmembrane proteins (BtuC) and a solute-binding protein (BtuF).

It is found in the cell inner membrane. Its function is as follows. Part of the ABC transporter complex BtuCDF involved in vitamin B12 import. Involved in the translocation of the substrate across the membrane. The polypeptide is Vitamin B12 import system permease protein BtuC (Salmonella enteritidis PT4 (strain P125109)).